We begin with the raw amino-acid sequence, 313 residues long: Protein ABA AND ROS SENSITIVE 1 (313 aa).

The Nuclear localization signal 1 motif lies at A5–R12. The segment at C39 to H61 adopts a C2H2-type zinc-finger fold. Residues A115–K131 show a composition bias toward basic and acidic residues. Disordered regions lie at residues A115–G189, M232–Y254, and A271–L313. Residues T155–P176 are compositionally biased toward polar residues. Acidic residues predominate over residues M232 to Q248. A coiled-coil region spans residues M232–A271. The Nuclear localization signal 2 motif lies at A274 to E281. The span at E293–A305 shows a compositional bias: acidic residues.

Mostly expressed in siliques and, to a lower extent, in roots. Barely deteclable in leaves and stems.

The protein localises to the nucleus. It localises to the cytoplasm. Its function is as follows. Essential for breaking seed dormancy before seed germination. Prevents reactive oxygen species (ROS) accumulation in response to abscisic acid (ABA) and oxidative stress, probably by repressing the accumulation of ABA-induced ROS-scavenging enzymes (e.g. CSD3). The chain is Protein ABA AND ROS SENSITIVE 1 from Arabidopsis thaliana (Mouse-ear cress).